A 685-amino-acid chain; its full sequence is Beta-taxilin (685 aa).

Positions 1-135 are disordered; sequence MEINHPDQLS…KEPVSNKEQK (135 aa). Residues 18–28 are compositionally biased toward polar residues; sequence GDSSSLNQNGP. 2 stretches are compositionally biased toward basic and acidic residues: residues 47–67 and 80–90; these read GSLHPEKGAHDVAEELSRQLE and RGKESTSETKE. A compositionally biased stretch (acidic residues) spans 98 to 113; the sequence is PDNEDVDYEETTEEID. 2 coiled-coil regions span residues 138-354 and 381-470; these read KKIL…VLKE and NEVF…SEKE. Over residues 465-478 the composition is skewed to basic and acidic residues; that stretch reads KMSEKEDQVQRTSE. Disordered stretches follow at residues 465 to 497 and 517 to 685; these read KMSEKEDQVQRTSEEEPEPSVSENEEVDAEEAN and EFTP…NGVD. A phosphoserine mark is found at S477, S484, and S486. Over residues 479–495 the composition is skewed to acidic residues; that stretch reads EEPEPSVSENEEVDAEE. The segment covering 575-591 has biased composition (low complexity); sequence CEATPAPTASCTPAEAE. The segment covering 612–627 has biased composition (polar residues); sequence ANTSGQAPLSPAQGSL.

Belongs to the taxilin family. As to quaternary structure, binds to the C-terminal coiled coil region of syntaxin family members STX1A, STX3A and STX4A. Has a preference for STX1A. As to expression, specifically expressed in skeletal muscle.

In terms of biological role, promotes motor nerve regeneration. May be involved in intracellular vesicle traffic. In Mus musculus (Mouse), this protein is Beta-taxilin (Txlnb).